The sequence spans 280 residues: Large ribosomal subunit protein uL2 (280 aa).

Disordered regions lie at residues 29 to 58 (PEKS…GGGH) and 225 to 280 (VMNP…NKKR). The segment covering 45–58 (SHGHITTRHRGGGH) has biased composition (basic residues). A compositionally biased stretch (basic and acidic residues) spans 253–269 (KEGRTRKPKRYSDDMIV). Positions 270–280 (RRRRANKNKKR) are enriched in basic residues.

Belongs to the universal ribosomal protein uL2 family. As to quaternary structure, part of the 50S ribosomal subunit. Forms a bridge to the 30S subunit in the 70S ribosome.

In terms of biological role, one of the primary rRNA binding proteins. Required for association of the 30S and 50S subunits to form the 70S ribosome, for tRNA binding and peptide bond formation. It has been suggested to have peptidyltransferase activity; this is somewhat controversial. Makes several contacts with the 16S rRNA in the 70S ribosome. In Corynebacterium glutamicum (strain R), this protein is Large ribosomal subunit protein uL2.